Here is a 371-residue protein sequence, read N- to C-terminus: Enoyl-[acyl-carrier-protein] reductase [NADH] 2, chloroplastic (371 aa).

A chloroplast-targeting transit peptide spans 1 to 67; that stretch reads MGASVTTGLQ…SLNHKRFAVR (67 aa). NAD(+)-binding positions include glycine 87, tyrosine 94, 151-152, 198-199, and leucine 248; these read DA and SL. Catalysis depends on proton acceptor residues tyrosine 250 and tyrosine 260. NAD(+) contacts are provided by residues lysine 268 and 298-302; that span reads LGSRA.

Belongs to the short-chain dehydrogenases/reductases (SDR) family. FabI subfamily. Homotetramer.

It localises to the plastid. Its subcellular location is the chloroplast. It catalyses the reaction a 2,3-saturated acyl-[ACP] + NAD(+) = a (2E)-enoyl-[ACP] + NADH + H(+). Its pathway is lipid metabolism; fatty acid biosynthesis. Its function is as follows. Catalyzes the NAD-dependent reduction of a carbon-carbon double bond in an enoyl moiety that is covalently linked to an acyl carrier protein (ACP). Catalyzes the last reduction step in the de novo synthesis cycle of fatty acids. Involved in the elongation cycle of fatty acids which are used in lipid metabolism. Required for normal plant growth. This Oryza sativa subsp. japonica (Rice) protein is Enoyl-[acyl-carrier-protein] reductase [NADH] 2, chloroplastic.